Reading from the N-terminus, the 254-residue chain is Ribosomal RNA small subunit methyltransferase J (254 aa).

S-adenosyl-L-methionine contacts are provided by residues 107 to 108, 123 to 124, and Asp174; these read RD and ER.

The protein belongs to the methyltransferase superfamily. RsmJ family.

Its subcellular location is the cytoplasm. It catalyses the reaction guanosine(1516) in 16S rRNA + S-adenosyl-L-methionine = N(2)-methylguanosine(1516) in 16S rRNA + S-adenosyl-L-homocysteine + H(+). Functionally, specifically methylates the guanosine in position 1516 of 16S rRNA. This chain is Ribosomal RNA small subunit methyltransferase J, found in Coxiella burnetii (strain Dugway 5J108-111).